The chain runs to 729 residues: Receptor-like protein 2 (729 aa).

The signal sequence occupies residues 1–44 (MRSKAKGLVRPLITKPVQPLSSHMHLFLLCILFLSALFLTLSEA). An N-cap region spans residues 45 to 82 (VCNLQDRESLIWFSGNVSSSVSPLNWNLSIDCCSWEGI). The Extracellular segment spans residues 45 to 707 (VCNLQDRESL…AKENDELNRT (663 aa)). N-linked (GlcNAc...) asparagine glycosylation is found at Asn-60 and Asn-71. LRR repeat units lie at residues 89 to 113 (DSHVTVISLPSRGLSGTLASSVQNI), 114 to 137 (HRLSRLDLSYNRLSGPLPPGFFST), 139 to 163 (DQLMILNLSYNSFNGELPLEQAFGN), 168 to 193 (FFSIQTLDLSSNLLEGEILRSSVYLQ), 195 to 219 (TINLISFNVSNNSFTGPIPSFMCRS), 220 to 244 (SPQLSKLDFSYNDFSGHISQELGRC), 245 to 268 (LRLTVLQAGFNNLSGVIPSEIYNL), 269 to 292 (SELEQLFLPANQLTGKIDNNITRL), 293 to 316 (RKLTSLALYSNHLEGEIPMDIGNL), 317 to 340 (SSLRSLQLHINNINGTVPLSLANC), 342 to 364 (KLVKLNLRVNQLGGGLTELEFSQ), 365 to 389 (LQSLKVLDLGNNSFTGALPDKIFSC), 391 to 413 (SLTAIRFAGNKLTGEISPQVLEL), 414 to 437 (ESLSFMGLSDNKLTNITGALSILQ), 439 to 464 (CRKLSTLILAKNFYDETVPSKEDFLS), 468 to 492 (FPKLRIFGVGACRLRGEIPAWLINL), 493 to 515 (NKVEVMDLSMNRFVGSIPGWLGT), 516 to 540 (LPDLFYLDLSDNLLTGELPKELFQL), 542 to 560 (ALMSQKITENNYLELPIFL), and 561 to 584 (NPNNVTTNQQYNKLYSFPPTIYIR). N-linked (GlcNAc...) asparagine glycosylation is found at Asn-145 and Asn-163. N-linked (GlcNAc...) asparagine glycans are attached at residues Asn-202 and Asn-205. N-linked (GlcNAc...) asparagine glycans are attached at residues Asn-256, Asn-267, Asn-288, Asn-315, Asn-330, and Asn-339. Asn-375 is a glycosylation site (N-linked (GlcNAc...) asparagine). The N-linked (GlcNAc...) asparagine glycan is linked to Asn-428. N-linked (GlcNAc...) asparagine glycans are attached at residues Asn-564, Asn-587, Asn-611, Asn-622, Asn-635, Asn-657, and Asn-705. LRR repeat units lie at residues 599-623 (LKVLHILELLGNNLSGSIPDELSNL), 624-647 (TNLERLDLSNNNLSGSIPWSLTNL), and 649-672 (FLSYFNVANNSLEGPIPSEGQFDT). The interval 690–707 (LTSCKPTRAKENDELNRT) is C-cap/acidic domain. The chain crosses the membrane as a helical span at residues 708–728 (FLMGIAIGYFLSFVSILVVRA). Residue Trp-729 is a topological domain, cytoplasmic.

It belongs to the RLP family.

The protein localises to the cell membrane. Its function is as follows. Involved in the perception of CLV3 and CLV3-like peptides, that act as extracellular signals regulating meristems maintenance. The protein is Receptor-like protein 2 of Arabidopsis thaliana (Mouse-ear cress).